The following is a 249-amino-acid chain: Hydroxyacylglutathione hydrolase (249 aa).

The Zn(2+) site is built by histidine 53, histidine 55, aspartate 57, histidine 58, histidine 110, aspartate 127, and histidine 165.

It belongs to the metallo-beta-lactamase superfamily. Glyoxalase II family. In terms of assembly, monomer. The cofactor is Zn(2+).

The catalysed reaction is an S-(2-hydroxyacyl)glutathione + H2O = a 2-hydroxy carboxylate + glutathione + H(+). It functions in the pathway secondary metabolite metabolism; methylglyoxal degradation; (R)-lactate from methylglyoxal: step 2/2. Functionally, thiolesterase that catalyzes the hydrolysis of S-D-lactoyl-glutathione to form glutathione and D-lactic acid. The polypeptide is Hydroxyacylglutathione hydrolase (Buchnera aphidicola subsp. Baizongia pistaciae (strain Bp)).